A 218-amino-acid polypeptide reads, in one-letter code: Adenylate kinase (218 aa).

10-15 (GAGKGT) is a binding site for ATP. Residues 30-59 (STGDMLRAAVKQGTPLGQEAKKVMDAGGLV) are NMP. AMP-binding positions include threonine 31, arginine 36, 57-59 (GLV), 85-88 (GFPR), and glutamine 92. The tract at residues 122 to 159 (GRRVHPASGRSYHVRFNPPKQEGLDDVTGEPLVQRDDD) is LID. ATP contacts are provided by residues arginine 123 and 132–133 (SY). Residues arginine 156 and arginine 167 each coordinate AMP. Glycine 203 is an ATP binding site.

Belongs to the adenylate kinase family. As to quaternary structure, monomer.

The protein localises to the cytoplasm. It catalyses the reaction AMP + ATP = 2 ADP. The protein operates within purine metabolism; AMP biosynthesis via salvage pathway; AMP from ADP: step 1/1. Functionally, catalyzes the reversible transfer of the terminal phosphate group between ATP and AMP. Plays an important role in cellular energy homeostasis and in adenine nucleotide metabolism. The chain is Adenylate kinase from Bordetella petrii (strain ATCC BAA-461 / DSM 12804 / CCUG 43448).